Here is a 196-residue protein sequence, read N- to C-terminus: MKMNDSSKLKKLYQIEEKKFAERVRRYEDIGHMMDTHQFYLEDVVLKKEEMLYKYISPSQGIAELSEEDSLGFDYEFIHKSVGNKEWRGGISTGEMIKVRKLPCTNLAHGGERNARTSSRMQKTKGGRVYACEIEGCNKKYTSSFGLKYHMKEGHSEEKMNIFKPYVCPFSGCDKKYKNNNGLKYHIKHYHDGQTA.

2 consecutive C2H2-type zinc fingers follow at residues 130–155 (YACE…KEGH) and 166–191 (YVCP…KHYH).

The chain is Zinc finger C2H2 protein ECU03_0940 from Encephalitozoon cuniculi (strain GB-M1) (Microsporidian parasite).